Consider the following 268-residue polypeptide: Nitrite transporter NirC (268 aa).

Over 1–25 the chain is Cytoplasmic; it reads MFTDTINKCAANAARIARLSANNPL. Residues 26 to 46 traverse the membrane as a helical segment; it reads GFWVSSAMAGAYVGLGIILIF. Residues 47 to 59 lie on the Periplasmic side of the membrane; sequence TLGNLLDPSVRPL. A helical membrane pass occupies residues 60-80; sequence VMGATFGIALTLVIIAGSELF. At 81–112 the chain is on the cytoplasmic side; sequence TGHTMFLTFGVKAGSISHGQMWAILPQTWLGN. Residues 113–133 traverse the membrane as a helical segment; it reads LVGSVFVAMLYSWGGGSLLPV. Over 134–151 the chain is Periplasmic; sequence DTSIVHSVALAKTTAPAM. Residues 152 to 172 form a helical membrane-spanning segment; the sequence is VLFFKGALCNWLVCLAIWMAL. Residues 173 to 179 lie on the Cytoplasmic side of the membrane; that stretch reads RTEGAAK. The chain crosses the membrane as a helical span at residues 180–200; that stretch reads FIAIWWCLLAFIASGYEHSIA. Over 201–225 the chain is Periplasmic; sequence NMTLFALSWFGNHSEAYTLAGIGHN. Residues 226 to 246 traverse the membrane as a helical segment; the sequence is LLWVTLGNTLSGAVFMGLGYW. The Cytoplasmic segment spans residues 247–268; sequence YATPKANRPVADKFNQTETAAG.

This sequence belongs to the FNT transporter (TC 1.A.16) family.

It localises to the cell inner membrane. Functionally, catalyzes nitrite uptake and nitrite export across the cytoplasmic membrane. Is up to 10-fold more active than NarK or NarU in nitrite uptake for subsequent reduction in the cytoplasm by the NirB/NirD nitrite reductase. The chain is Nitrite transporter NirC (nirC) from Escherichia coli (strain K12).